A 626-amino-acid polypeptide reads, in one-letter code: SHC-transforming protein 4 (626 aa).

Positions 1-185 (MRERSQDSQA…KQDGPPLQHL (185 aa)) are CH2. 2 disordered regions span residues 38 to 76 (ITSLDEGSPGGSVGNKGSSPPPYPALAPHLPTEDATVSS) and 119 to 182 (LQEN…GPPL). The segment covering 120 to 139 (QENQDQTPSRPASPESNLNR) has biased composition (polar residues). The PID domain occupies 186–369 (LGNGLNYCVR…LVDGAPEDRD (184 aa)). Residues 370–521 (HDYYNSIPGK…HIRQQLWDEE (152 aa)) form a CH1 region. At Tyr-422 the chain carries Phosphotyrosine. Residues 522 to 613 (CFHGKLSRGA…GSEVRLKQPI (92 aa)) form the SH2 domain.

In terms of assembly, interacts (via PID domain) with phosphorylated MUSK (via NPXY motif); undergoes tyrosine phosphorylation downstream of activated MUSK. Interacts with GRB2; the interaction is dependent of Tyr-422 phosphorylation and increased by EGF. In terms of processing, phosphorylated; the phosphorylation is enhanced by EGF. Phosphorylation at Tyr-422 is required for the interaction with GRB2. As to expression, expressed in both brain and skeletal muscle; widely expressed in brain namely olfactory bulb, cortex, hippocampus, striatum, thalamus, and brain stem (at protein level). Only expressed in melanomas. Weakly expressed in normal melanocytes and benign nevi. Highly expressed at the transition from radial growth phase to vertical growth phase and metastatic melanomas, when tumor cells acquire migratory competence and invasive potential.

The protein localises to the postsynaptic cell membrane. Activates both Ras-dependent and Ras-independent migratory pathways in melanomas. Contributes to the early phases of agrin-induced tyrosine phosphorylation of CHRNB1. The polypeptide is SHC-transforming protein 4 (Shc4) (Mus musculus (Mouse)).